Reading from the N-terminus, the 503-residue chain is ATP synthase subunit alpha (503 aa).

G170–T177 contacts ATP.

It belongs to the ATPase alpha/beta chains family. F-type ATPases have 2 components, CF(1) - the catalytic core - and CF(0) - the membrane proton channel. CF(1) has five subunits: alpha(3), beta(3), gamma(1), delta(1), epsilon(1). CF(0) has three main subunits: a(1), b(2) and c(9-12). The alpha and beta chains form an alternating ring which encloses part of the gamma chain. CF(1) is attached to CF(0) by a central stalk formed by the gamma and epsilon chains, while a peripheral stalk is formed by the delta and b chains.

It is found in the cell inner membrane. It carries out the reaction ATP + H2O + 4 H(+)(in) = ADP + phosphate + 5 H(+)(out). Produces ATP from ADP in the presence of a proton gradient across the membrane. The alpha chain is a regulatory subunit. The chain is ATP synthase subunit alpha from Geobacter sulfurreducens (strain ATCC 51573 / DSM 12127 / PCA).